A 415-amino-acid chain; its full sequence is FXa-directed anticoagulant (415 aa).

The signal sequence occupies residues 1–17; that stretch reads MYLKIVILVTFPLVCFT. N117, N166, N216, and N320 each carry an N-linked (GlcNAc...) asparagine glycan.

Belongs to the serpin family. (Microbial infection) Interacts with Zika virus envelope protein E and Zika virus-like particles; the interaction does not affect Zika virus replication in human endothelial cells and keratinocytes. The N-terminus is blocked. Female salivary gland (at protein level). Not detected in female carcass without head and salivary glands. Not detected in male tissues.

The protein resides in the secreted. In terms of biological role, anticoagulant serpin-type protein inhibiting host coagulation factor Xa (F10). Does not inhibit host thrombin (F2) and trypsin. Functionally, (Microbial infection) Does not affect Zika virus replication in human endothelial cells and keratinocytes. In Aedes aegypti (Yellowfever mosquito), this protein is FXa-directed anticoagulant.